The chain runs to 224 residues: ATP-dependent dethiobiotin synthetase BioD (224 aa).

Residue 12–17 (GVGKTF) coordinates ATP. Thr-16 lines the Mg(2+) pocket. Lys-37 is a catalytic residue. Substrate is bound at residue Thr-41. ATP contacts are provided by residues Asn-52, 107–110 (EGAG), 167–168 (GS), 197–199 (PEG), and Glu-204. Asn-52 and Glu-107 together coordinate Mg(2+).

Belongs to the dethiobiotin synthetase family. Homodimer. Mg(2+) is required as a cofactor.

Its subcellular location is the cytoplasm. It carries out the reaction (7R,8S)-7,8-diammoniononanoate + CO2 + ATP = (4R,5S)-dethiobiotin + ADP + phosphate + 3 H(+). Its pathway is cofactor biosynthesis; biotin biosynthesis; biotin from 7,8-diaminononanoate: step 1/2. Functionally, catalyzes a mechanistically unusual reaction, the ATP-dependent insertion of CO2 between the N7 and N8 nitrogen atoms of 7,8-diaminopelargonic acid (DAPA, also called 7,8-diammoniononanoate) to form a ureido ring. This Corynebacterium glutamicum (strain ATCC 13032 / DSM 20300 / JCM 1318 / BCRC 11384 / CCUG 27702 / LMG 3730 / NBRC 12168 / NCIMB 10025 / NRRL B-2784 / 534) protein is ATP-dependent dethiobiotin synthetase BioD.